The sequence spans 194 residues: Imidazoleglycerol-phosphate dehydratase (194 aa).

It belongs to the imidazoleglycerol-phosphate dehydratase family.

The protein localises to the cytoplasm. It catalyses the reaction D-erythro-1-(imidazol-4-yl)glycerol 3-phosphate = 3-(imidazol-4-yl)-2-oxopropyl phosphate + H2O. Its pathway is amino-acid biosynthesis; L-histidine biosynthesis; L-histidine from 5-phospho-alpha-D-ribose 1-diphosphate: step 6/9. This is Imidazoleglycerol-phosphate dehydratase from Streptococcus sanguinis (strain SK36).